The sequence spans 726 residues: Dipeptidyl-peptidase 5 (726 aa).

A signal peptide spans 1-19 (MAAAKWLIASLAFASSGLA). 2 N-linked (GlcNAc...) asparagine glycosylation sites follow: Asn96 and Asn252. The segment at 269 to 291 (AEPINKRNGPRTPQGIEGASSSP) is disordered. The Charge relay system role is filled by Ser558. N-linked (GlcNAc...) asparagine glycosylation is present at Asn605. Active-site charge relay system residues include Asp641 and His673. Asn699 carries N-linked (GlcNAc...) asparagine glycosylation.

This sequence belongs to the peptidase S9C family.

It is found in the secreted. Its function is as follows. Extracellular dipeptidyl-peptidase which removes N-terminal dipeptides sequentially from polypeptides having unsubstituted N-termini. Contributes to pathogenicity. The protein is Dipeptidyl-peptidase 5 (DPP5) of Trichophyton tonsurans (Scalp ringworm fungus).